The following is a 346-amino-acid chain: Enkurin domain-containing protein 1 (346 aa).

The segment at 1–35 is disordered; the sequence is MCEGPSRISGPIPPDPTLCPDNYRRPTSAQGRLEG. Ser-91 bears the Phosphoserine mark. Residues 91-171 form a required for binding to microtubules region; sequence SLKRKDPKDH…AHFLRAHSRC (81 aa). Residues 114–125 show a composition bias toward basic and acidic residues; it reads RFREQERSREQG. Disordered stretches follow at residues 114–137, 167–197, and 260–280; these read RFREQERSREQGQPRPLKALWRSP, AHSRCGPGLPPPHVSSPQPTPPGPEAKEPGL, and AEARKQSQPDPAMPPGHTRMP. Ser-136 carries the post-translational modification Phosphoserine. Residues 174-190 show a composition bias toward pro residues; the sequence is GLPPPHVSSPQPTPPGP. The region spanning 251 to 343 is the Enkurin domain; that stretch reads ERRDLWRREA…IFSRPKVFVK (93 aa).

In terms of assembly, interacts with alpha-tubulin. Interacts (via central region) with CCP110 (via N-terminal region); competes with CEP97 for binding to CCP110.

It is found in the cytoplasm. It localises to the cytoskeleton. Its subcellular location is the microtubule organizing center. The protein resides in the centrosome. The protein localises to the centriole. It is found in the cilium basal body. It localises to the cell projection. Its subcellular location is the cilium. The protein resides in the spindle. The protein localises to the spindle pole. It is found in the cilium axoneme. In terms of biological role, microtubule-binding protein which regulates microtubule organization and stability. Promotes the stability of astral microtubules and facilitates the proper orientation of the mitotic spindle. This allows the oriented division of basal keratinocytes and contributes to epidermal stratification. Required for the assembly of both primary and motile cilia. Destabilizes the interaction between CCP110 and CEP97 by competing with CEP97 for binding to CCP110 which promotes the removal of CCP110 and CEP97 from the mother centriole and allows the initiation of ciliogenesis. The sequence is that of Enkurin domain-containing protein 1 (ENKD1) from Homo sapiens (Human).